A 554-amino-acid polypeptide reads, in one-letter code: 3-(3-hydroxy-phenyl)propionate/3-hydroxycinnamic acid hydroxylase (554 aa).

Residues 17–46 (QVAI…VVEK) and 285–295 (FRIDRVLLAGD) contribute to the FAD site.

The protein belongs to the PheA/TfdB FAD monooxygenase family. Requires FAD as cofactor.

The catalysed reaction is 3-(3-hydroxyphenyl)propanoate + NADH + O2 + H(+) = 3-(2,3-dihydroxyphenyl)propanoate + NAD(+) + H2O. The enzyme catalyses (2E)-3-(3-hydroxyphenyl)prop-2-enoate + NADH + O2 + H(+) = (2E)-3-(2,3-dihydroxyphenyl)prop-2-enoate + NAD(+) + H2O. It participates in aromatic compound metabolism; 3-phenylpropanoate degradation. Functionally, catalyzes the insertion of one atom of molecular oxygen into position 2 of the phenyl ring of 3-(3-hydroxyphenyl)propionate (3-HPP) and hydroxycinnamic acid (3HCI). In Escherichia coli O157:H7, this protein is 3-(3-hydroxy-phenyl)propionate/3-hydroxycinnamic acid hydroxylase.